Here is a 224-residue protein sequence, read N- to C-terminus: UPF0758 protein PFL_6051 (224 aa).

Positions 102 to 224 (ALENPLVVRD…PLSMAEYGWI (123 aa)) constitute an MPN domain. 3 residues coordinate Zn(2+): His-173, His-175, and Asp-186. The JAMM motif motif lies at 173-186 (HNHPSGICEPSPAD).

The protein belongs to the UPF0758 family.

The protein is UPF0758 protein PFL_6051 of Pseudomonas fluorescens (strain ATCC BAA-477 / NRRL B-23932 / Pf-5).